We begin with the raw amino-acid sequence, 626 residues long: Leucine aminopeptidase 2-1 (626 aa).

Residues 134–136 (QCQ) and 259–264 (PYGGME) each bind substrate. His-288 contributes to the Zn(2+) binding site. Glu-289 (proton acceptor) is an active-site residue. Zn(2+) contacts are provided by His-292 and Glu-311. Residue Tyr-389 is the Proton donor of the active site.

Belongs to the peptidase M1 family. The cofactor is Zn(2+).

The protein resides in the cytoplasm. Its subcellular location is the nucleus. The enzyme catalyses an epoxide + H2O = an ethanediol. Functionally, aminopeptidase that preferentially cleaves di- and tripeptides. Also has low epoxide hydrolase activity (in vitro). Can hydrolyze the epoxide leukotriene LTA(4) but it forms preferentially 5,6-dihydroxy-7,9,11,14-eicosatetraenoic acid rather than the cytokine leukotriene B(4) as the product compared to the homologous mammalian enzyme (in vitro). The protein is Leucine aminopeptidase 2-1 (LKA4) of Scheffersomyces stipitis (strain ATCC 58785 / CBS 6054 / NBRC 10063 / NRRL Y-11545) (Yeast).